The sequence spans 297 residues: Tumor necrosis factor receptor superfamily member 27 (297 aa).

Topologically, residues 1-138 (MDCQENEYWD…TPTVPPQEAT (138 aa)) are extracellular. 3 TNFR-Cys repeats span residues 2 to 41 (DCQE…DAYC), 43 to 83 (ACPP…NAVC), and 85 to 118 (DCLP…EVQC). 8 disulfide bridges follow: Cys-3–Cys-15, Cys-18–Cys-31, Cys-21–Cys-41, Cys-44–Cys-58, Cys-61–Cys-75, Cys-64–Cys-83, Cys-86–Cys-104, and Cys-107–Cys-118. N-linked (GlcNAc...) asparagine glycosylation is present at Asn-74. The helical; Signal-anchor for type III membrane protein transmembrane segment at 139–159 (LVALVSSLLVVFTLAFLGLFF) threads the bilayer. The Cytoplasmic portion of the chain corresponds to 160 to 297 (LYCKQFFNRH…LNVPFEVPSP (138 aa)). Residues 272–281 (ETLGGNTVES) show a composition bias toward polar residues. The interval 272–297 (ETLGGNTVESTGDRLELNVPFEVPSP) is disordered.

As to quaternary structure, associates with TRAF1, TRAF3 and TRAF6.

It localises to the membrane. Its function is as follows. Receptor for EDA isoform A2, but not for EDA isoform A1. Mediates the activation of the NF-kappa-B and JNK pathways. Activation seems to be mediated by binding to TRAF3 and TRAF6. The protein is Tumor necrosis factor receptor superfamily member 27 (EDA2R) of Homo sapiens (Human).